A 236-amino-acid polypeptide reads, in one-letter code: Probable transcriptional regulatory protein UU295 (236 aa).

The protein belongs to the TACO1 family.

The protein localises to the cytoplasm. This is Probable transcriptional regulatory protein UU295 from Ureaplasma parvum serovar 3 (strain ATCC 700970).